Consider the following 747-residue polypeptide: Catalase-peroxidase (747 aa).

Residues 1–27 form the signal peptide; it reads MRKFSVSKVALLAATMAPALLPAAARA. Positions 116–238 form a cross-link, tryptophyl-tyrosyl-methioninium (Trp-Tyr) (with M-264); that stretch reads WHSAGTYRTA…LAAVQMGLIY (123 aa). His117 acts as the Proton acceptor in catalysis. Positions 238 to 264 form a cross-link, tryptophyl-tyrosyl-methioninium (Tyr-Met) (with W-116); sequence YVNPEGPNGNPDPLLAAKDIRETFGRM. His279 provides a ligand contact to heme b.

Belongs to the peroxidase family. Peroxidase/catalase subfamily. As to quaternary structure, homodimer or homotetramer. Heme b is required as a cofactor. Formation of the three residue Trp-Tyr-Met cross-link is important for the catalase, but not the peroxidase activity of the enzyme.

The enzyme catalyses H2O2 + AH2 = A + 2 H2O. The catalysed reaction is 2 H2O2 = O2 + 2 H2O. Its function is as follows. Bifunctional enzyme with both catalase and broad-spectrum peroxidase activity. The polypeptide is Catalase-peroxidase (Novosphingobium aromaticivorans (strain ATCC 700278 / DSM 12444 / CCUG 56034 / CIP 105152 / NBRC 16084 / F199)).